The chain runs to 284 residues: Distal membrane arm assembly component 2 (284 aa).

This sequence belongs to the ATP synthase subunit s family. Associates with mitochondrial complex I assembly intermediates during its biogenesis.

In terms of biological role, involved in the assembly of the mitochondrial membrane respiratory chain NADH dehydrogenase (Complex I). This Drosophila melanogaster (Fruit fly) protein is Distal membrane arm assembly component 2.